Reading from the N-terminus, the 185-residue chain is Recombination protein RecR (185 aa).

Residues 44–59 (CSVCFHLSSEPVCEIC) form a C4-type zinc finger. One can recognise a Toprim domain in the interval 67-161 (NTICVVADSR…KVTRIAFGLP (95 aa)).

This sequence belongs to the RecR family.

Functionally, may play a role in DNA repair. It seems to be involved in an RecBC-independent recombinational process of DNA repair. It may act with RecF and RecO. This is Recombination protein RecR from Trichormus variabilis (strain ATCC 29413 / PCC 7937) (Anabaena variabilis).